The following is a 218-amino-acid chain: Transcription initiation factor TFIID subunit 10 (218 aa).

Low complexity-rich tracts occupy residues 1-21 and 29-39; these read MSCS…ASAP and APAALPSSTAA. A disordered region spans residues 1-85; that stretch reads MSCSGSGADP…GAAPVSAGGA (85 aa). An N-acetylserine modification is found at Ser-2. Phosphoserine is present on Ser-44. Residue Thr-48 is modified to Phosphothreonine. Over residues 48 to 62 the composition is skewed to gly residues; sequence TAGGPGAGAAAGGTG. The [KR]-[STA]-K motif signature appears at 187–189; it reads KSK. Lys-189 carries the post-translational modification Allysine; alternate. The residue at position 189 (Lys-189) is an N6,N6,N6-trimethyllysine; alternate.

The protein belongs to the TAF10 family. Component of the TFIID basal transcription factor complex, composed of TATA-box-binding protein TBP, and a number of TBP-associated factors (TAFs), including TAF1, TAF2, TAF3, TAF4, TAF5, TAF6, TAF7, TAF8, TAF9, TAF10, TAF11, TAF12 and TAF13. Component of the TATA-binding protein-free TAF complex (TFTC), the PCAF histone acetylase complex and the STAGA transcription coactivator-HAT complex. The PCAF complex consists at least of TADA2L/ADA2, TADA3L/ADA3, SUPT3H, TAF5L TAF6L, TAF9, TAF10, TAF12 and TRRAP. The TFTC-HAT complex consists at least of TAF5L, TAF6L, TADA3L, SUPT3H, TAF2, TAF4, TAF5, GCN5L2/GCN5, TAF10 and TRRAP. The STAGA transcription coactivator-HAT complex consists at least of SUPT3H, GCN5L2, TAF5L, TAF6L, SUPT7L, TADA3L, TAD1L, TAF10, TAF12, TRRAP and TAF9. The STAGA core complex is associated with a subcomplex required for histone deubiquitination composed of ATXN7L3, ENY2 and USP22. Interacts with TAF3. Interacts with LOXL2. Interacts with TAF12 isoform TAFII20; the interaction is direct. In terms of processing, monomethylated at Lys-189 by SETD7, leading to increased affinity for RNA polymerase II. Lysine deamination at Lys-189 to form allysine is mediated by LOXL2. Allysine formation by LOXL2 results in release of TAF10 from promoters, leading to inhibition of TFIID-dependent transcription.

The protein localises to the nucleus. Its function is as follows. The TFIID basal transcription factor complex plays a major role in the initiation of RNA polymerase II (Pol II)-dependent transcription. TFIID recognizes and binds promoters with or without a TATA box via its subunit TBP, a TATA-box-binding protein, and promotes assembly of the pre-initiation complex (PIC). The TFIID complex consists of TBP and TBP-associated factors (TAFs), including TAF1, TAF2, TAF3, TAF4, TAF5, TAF6, TAF7, TAF8, TAF9, TAF10, TAF11, TAF12 and TAF13. TAF10 is also component of the PCAF histone acetylase complex, the TATA-binding protein-free TAF complex (TFTC) and the STAGA transcription coactivator-HAT complex. May regulate cyclin E expression. This chain is Transcription initiation factor TFIID subunit 10 (TAF10), found in Homo sapiens (Human).